A 592-amino-acid polypeptide reads, in one-letter code: Methionine--tRNA ligase (592 aa).

The short motif at 12-22 is the 'HIGH' region element; the sequence is PYANGPFHVGH. Zn(2+) is bound by residues C144, C147, C157, and C160. A 'KMSKS' region motif is present at residues 342–346; the sequence is KMSTS. Residue T345 coordinates ATP.

This sequence belongs to the class-I aminoacyl-tRNA synthetase family. MetG type 1 subfamily. In terms of assembly, monomer. The cofactor is Zn(2+).

The protein localises to the cytoplasm. It carries out the reaction tRNA(Met) + L-methionine + ATP = L-methionyl-tRNA(Met) + AMP + diphosphate. Functionally, is required not only for elongation of protein synthesis but also for the initiation of all mRNA translation through initiator tRNA(fMet) aminoacylation. This chain is Methionine--tRNA ligase, found in Roseiflexus sp. (strain RS-1).